The primary structure comprises 387 residues: Methylthioribose-1-phosphate isomerase (387 aa).

The active-site Proton donor is D257.

Belongs to the eIF-2B alpha/beta/delta subunits family. MtnA subfamily.

The protein localises to the cytoplasm. Its subcellular location is the nucleus. The catalysed reaction is 5-(methylsulfanyl)-alpha-D-ribose 1-phosphate = 5-(methylsulfanyl)-D-ribulose 1-phosphate. It participates in amino-acid biosynthesis; L-methionine biosynthesis via salvage pathway; L-methionine from S-methyl-5-thio-alpha-D-ribose 1-phosphate: step 1/6. Functionally, catalyzes the interconversion of methylthioribose-1-phosphate (MTR-1-P) into methylthioribulose-1-phosphate (MTRu-1-P). The polypeptide is Methylthioribose-1-phosphate isomerase (mri1) (Aspergillus fumigatus (strain CBS 144.89 / FGSC A1163 / CEA10) (Neosartorya fumigata)).